Consider the following 183-residue polypeptide: Intraflagellar transport protein 27 homolog (183 aa).

GTP contacts are provided by residues glycine 12–threonine 19, aspartate 63–glutamine 67, and asparagine 120–aspartate 123.

The protein belongs to the small GTPase superfamily. Rab family. As to quaternary structure, component of the IFT complex B.

It localises to the cell projection. The protein localises to the cilium. Its subcellular location is the flagellum. Functionally, small GTPase-like component of the intraflagellar transport (IFT) complex B required for both anterograde and retrograde intraflagellar transport. May be involved in cargo loading of the retrograde transport. The sequence is that of Intraflagellar transport protein 27 homolog from Trypanosoma brucei brucei (strain 927/4 GUTat10.1).